A 457-amino-acid chain; its full sequence is Argininosuccinate lyase (457 aa).

The protein belongs to the lyase 1 family. Argininosuccinate lyase subfamily.

It localises to the cytoplasm. The catalysed reaction is 2-(N(omega)-L-arginino)succinate = fumarate + L-arginine. It participates in amino-acid biosynthesis; L-arginine biosynthesis; L-arginine from L-ornithine and carbamoyl phosphate: step 3/3. This chain is Argininosuccinate lyase, found in Haemophilus influenzae (strain PittGG).